The primary structure comprises 361 residues: MQTYGNPEVTYGWWAGNSVVTNRSGRFIASHVGHTGLICFAAGGSTLWELARYNPEIPMGHQSSLFLAHLASIGIGFDEAGAWTGVGVATIAIVHLILSMVYGGGGLLHGILFDENVEDSEVLQAKKFKLEWNNPDNQTFILGHHLIFMGVACAWFVEWARIHGIYDPALGAIRQVNYNLDLSMIWQRQFDFITIDSLEDVMGGHAFLAFAEITGGAFHIVAGSTPWEDKKLGEWSKFKGSELLSAEAVLSWSLAGIGWMAIVAAFWCASNTTVYPEAWYGEPLQFKFAISPYWVDTGDLSDATAFWGHSARAALTNVHYYLGFFFLQGHFWHALRALGFNFKNVTASIGNEQKATFTIKS.

A run of 6 helical transmembrane segments spans residues 27–47 (FIAS…GSTL), 93–113 (IVHL…GILF), 140–160 (FILG…VEWA), 201–221 (VMGG…FHIV), 248–268 (AVLS…AFWC), and 315–335 (LTNV…WHAL).

It belongs to the PsbB/PsbC family. IsiA/Pcb subfamily. The antenna complex consists of divinyl chlorophylls (a and b) and divinyl chlorophyll a/b binding proteins and binds more divinyl chlorophyll b than does the antenna complex from high-light-adapted Prochlorococcus. The cofactor is divinyl chlorophyll a. It depends on divinyl chlorophyll b as a cofactor.

It localises to the cellular thylakoid membrane. Its function is as follows. The antenna complex functions as a light receptor, it captures and delivers excitation energy to photosystems II and I. The Prochlorales pcb genes are not related to higher plant LHCs. This Prochlorococcus marinus (strain SARG / CCMP1375 / SS120) protein is Divinyl chlorophyll a/b light-harvesting protein PcbD (pcbD).